The following is a 74-amino-acid chain: Defensin-like protein 39 (74 aa).

Positions 1 to 28 (MEKKSLAALSFLLLLVLFVAQEIVVTEA) are cleaved as a signal peptide. Cystine bridges form between Cys-31-Cys-74, Cys-42-Cys-63, Cys-48-Cys-68, and Cys-52-Cys-70.

It belongs to the DEFL family. Pods.

It localises to the secreted. In terms of biological role, possesses antifungal activity. This chain is Defensin-like protein 39 (PI39), found in Pisum sativum (Garden pea).